The chain runs to 318 residues: Pantothenate kinase (318 aa).

96–103 (GSVAVGKS) provides a ligand contact to ATP.

The protein belongs to the prokaryotic pantothenate kinase family.

The protein resides in the cytoplasm. It catalyses the reaction (R)-pantothenate + ATP = (R)-4'-phosphopantothenate + ADP + H(+). The protein operates within cofactor biosynthesis; coenzyme A biosynthesis; CoA from (R)-pantothenate: step 1/5. This chain is Pantothenate kinase, found in Rhodopseudomonas palustris (strain BisB5).